The following is a 428-amino-acid chain: Enolase (428 aa).

(2R)-2-phosphoglycerate is bound at residue Gln163. Glu205 functions as the Proton donor in the catalytic mechanism. Mg(2+) contacts are provided by Asp242, Glu285, and Asp312. 4 residues coordinate (2R)-2-phosphoglycerate: Lys337, Arg366, Ser367, and Lys388. Residue Lys337 is the Proton acceptor of the active site.

Belongs to the enolase family. The cofactor is Mg(2+).

The protein resides in the cytoplasm. Its subcellular location is the secreted. It localises to the cell surface. It carries out the reaction (2R)-2-phosphoglycerate = phosphoenolpyruvate + H2O. It participates in carbohydrate degradation; glycolysis; pyruvate from D-glyceraldehyde 3-phosphate: step 4/5. Its function is as follows. Catalyzes the reversible conversion of 2-phosphoglycerate (2-PG) into phosphoenolpyruvate (PEP). It is essential for the degradation of carbohydrates via glycolysis. This Nitrosomonas europaea (strain ATCC 19718 / CIP 103999 / KCTC 2705 / NBRC 14298) protein is Enolase.